The sequence spans 252 residues: MSGRRTRSGGAAQRSGPRAPSPTKPLRRSQRKSGSELPSILPEIWPKTPSAAAVRKPIVLKRIVAHAVEVPAVQSPRRSPRISFFLEKENEPPGRELTKEDLFKTHSVPATPTSTPVPNPEAESSSKEGELDARDLEMSKKVRRSYSRLETLGSASTSTPGRRSCFGFEGLLGAEDLSGVSPVVCSKLTEVPRVCAKPWAPDMTLPGISPPPEKQKRKKKKMPEILKTELDEWAAAMNAEFEAAEQFDLLVE.

Disordered regions lie at residues 1–48 (MSGR…WPKT) and 72–142 (AVQS…SKKV). 6 positions are modified to phosphoserine: Ser21, Ser33, Ser35, Ser75, Ser79, and Ser83. Basic and acidic residues predominate over residues 86 to 104 (LEKENEPPGRELTKEDLFK). Residues 88–90 (KEN) carry the KEN box motif. Thr98 is modified (phosphothreonine). Low complexity predominate over residues 105-116 (THSVPATPTSTP). Ser107 is modified (phosphoserine). Phosphothreonine occurs at positions 111 and 115. Residues 124 to 140 (SSSKEGELDARDLEMSK) show a composition bias toward basic and acidic residues. Ser154 is modified (phosphoserine). Residue Thr159 is modified to Phosphothreonine. The FGF motif signature appears at 166-168 (FGF). Residues 199–222 (WAPDMTLPGISPPPEKQKRKKKKM) form a disordered region. Ser209 carries the post-translational modification Phosphoserine. Residues 230–252 (LDEWAAAMNAEFEAAEQFDLLVE) form a C-terminal Sororin domain region.

This sequence belongs to the sororin family. As to quaternary structure, interacts with the APC/C complex. Interacts with the chromatin-bound cohesin complex; the interaction is indirect, occurs after DNA replication and requires acetylation of the cohesin component SMC3. Interacts (via the FGF motif) with PDS5A and PDS5B; the interaction is direct and prevents the interaction of PDS5A with WAPL. Phosphorylated. Phosphorylation, as cells enter mitosis, disrupts the interaction with PDS5A and relieves the inhibition of WAPL by CDCA5. Post-translationally, ubiquitinated by the APC/C complex in G1, leading to its degradation.

It is found in the nucleus. Its subcellular location is the chromosome. It localises to the cytoplasm. Its function is as follows. Regulator of sister chromatid cohesion in mitosis stabilizing cohesin complex association with chromatin. May antagonize the action of WAPL which stimulates cohesin dissociation from chromatin. Cohesion ensures that chromosome partitioning is accurate in both meiotic and mitotic cells and plays an important role in DNA repair. Required for efficient DNA double-stranded break repair. This Homo sapiens (Human) protein is Sororin (CDCA5).